The following is a 291-amino-acid chain: 4-hydroxy-tetrahydrodipicolinate synthase (291 aa).

T45 is a binding site for pyruvate. Y131 (proton donor/acceptor) is an active-site residue. K159 (schiff-base intermediate with substrate) is an active-site residue. I202 serves as a coordination point for pyruvate.

The protein belongs to the DapA family. In terms of assembly, homotetramer; dimer of dimers.

The protein localises to the cytoplasm. The enzyme catalyses L-aspartate 4-semialdehyde + pyruvate = (2S,4S)-4-hydroxy-2,3,4,5-tetrahydrodipicolinate + H2O + H(+). The protein operates within amino-acid biosynthesis; L-lysine biosynthesis via DAP pathway; (S)-tetrahydrodipicolinate from L-aspartate: step 3/4. Its function is as follows. Catalyzes the condensation of (S)-aspartate-beta-semialdehyde [(S)-ASA] and pyruvate to 4-hydroxy-tetrahydrodipicolinate (HTPA). The sequence is that of 4-hydroxy-tetrahydrodipicolinate synthase from Methanococcoides burtonii (strain DSM 6242 / NBRC 107633 / OCM 468 / ACE-M).